A 203-amino-acid chain; its full sequence is Thymidylate kinase (203 aa).

Residue Gly14–Ser21 participates in ATP binding.

The protein belongs to the thymidylate kinase family.

The catalysed reaction is dTMP + ATP = dTDP + ADP. In terms of biological role, phosphorylation of dTMP to form dTDP in both de novo and salvage pathways of dTTP synthesis. This Rickettsia conorii (strain ATCC VR-613 / Malish 7) protein is Thymidylate kinase.